A 48-amino-acid polypeptide reads, in one-letter code: Large ribosomal subunit protein bL32 (48 aa).

Basic residues predominate over residues 1–20 (MAVPKRRVSKTRAAKRRTHY). The interval 1–48 (MAVPKRRVSKTRAAKRRTHYKVSLPMPVKDKDGSYKMPHRANPTTKEY) is disordered.

Belongs to the bacterial ribosomal protein bL32 family.

In Campylobacter jejuni subsp. doylei (strain ATCC BAA-1458 / RM4099 / 269.97), this protein is Large ribosomal subunit protein bL32.